The primary structure comprises 141 residues: Hemoglobin subunit alpha-A (141 aa).

Positions 1–141 (VLSAADKANV…VGAVLTAKYR (141 aa)) constitute a Globin domain. Residue H58 coordinates O2. H87 serves as a coordination point for heme b.

This sequence belongs to the globin family. In terms of assembly, heterotetramer of two alpha chains and two beta chains. In terms of tissue distribution, red blood cells.

In terms of biological role, involved in oxygen transport from the lung to the various peripheral tissues. This Chloephaga melanoptera (Andean goose) protein is Hemoglobin subunit alpha-A (HBAA).